Here is a 135-residue protein sequence, read N- to C-terminus: Class I hydrophobin dewB (135 aa).

The signal sequence occupies residues 1–17 (MKFIGLATLSLFALASA). Disulfide bonds link C35–C109, C43–C103, C44–C84, and C110–C128.

This sequence belongs to the fungal hydrophobin family. Self-assembles to form functional amyloid fibrils called rodlets. Self-assembly into fibrillar rodlets occurs spontaneously at hydrophobic:hydrophilic interfaces and the rodlets further associate laterally to form amphipathic monolayers.

The protein resides in the secreted. The protein localises to the spore wall. Its function is as follows. Aerial growth, conidiation, and dispersal of filamentous fungi in the environment rely upon a capability of their secreting small amphipathic proteins called hydrophobins (HPBs) with low sequence identity. Class I can self-assemble into an outermost layer of rodlet bundles on aerial cell surfaces, conferring cellular hydrophobicity that supports fungal growth, development and dispersal; whereas Class II form highly ordered films at water-air interfaces through intermolecular interactions but contribute nothing to the rodlet structure. DewB is a class I hydrophobin that contributes to the hydrophobicity of the spore surface. This is Class I hydrophobin dewB from Emericella nidulans (strain FGSC A4 / ATCC 38163 / CBS 112.46 / NRRL 194 / M139) (Aspergillus nidulans).